A 184-amino-acid polypeptide reads, in one-letter code: Nucleoporin-62 C-terminal-like protein (184 aa).

Positions 117 to 151 form a coiled coil; sequence RILHGEVNKVKLDQKRLEQELDFILSQQQELEFLL.

It belongs to the nucleoporin NSP1/NUP62 family.

The polypeptide is Nucleoporin-62 C-terminal-like protein (NUP62CL) (Homo sapiens (Human)).